The following is a 184-amino-acid chain: Probable cobalt-precorrin-6B C(15)-methyltransferase (decarboxylating) (184 aa).

S-adenosyl-L-methionine is bound by residues Thr12, 36–40 (GCGTG), Asp59, and Ala87.

The protein belongs to the methyltransferase superfamily. Archaeal-type CbiT family.

It carries out the reaction Co-precorrin-6B + S-adenosyl-L-methionine = Co-precorrin-7 + S-adenosyl-L-homocysteine + CO2. The protein operates within cofactor biosynthesis; adenosylcobalamin biosynthesis; cob(II)yrinate a,c-diamide from sirohydrochlorin (anaerobic route): step 8/10. Catalyzes the methylation of C-15 in cobalt-precorrin-6B followed by the decarboxylation of C-12 to form cobalt-precorrin-7. In Methanosarcina mazei (strain ATCC BAA-159 / DSM 3647 / Goe1 / Go1 / JCM 11833 / OCM 88) (Methanosarcina frisia), this protein is Probable cobalt-precorrin-6B C(15)-methyltransferase (decarboxylating).